A 1120-amino-acid chain; its full sequence is Terminal uridylyltransferase 1 (1120 aa).

2 disordered regions span residues 1–156 and 196–221; these read MSKY…SAVE and AALI…PHTP. Residues 7 to 16 show a composition bias toward polar residues; sequence LFNQGTKDGT. A compositionally biased stretch (low complexity) spans 17-59; it reads NASSGSEANSANITSSSAPASSTNTSSPTSSESAVVSPPASTS. The segment covering 60-70 has biased composition (basic residues); the sequence is PRRRLIHRRHG. The segment covering 90–103 has biased composition (basic and acidic residues); sequence NEEKHENFISDSVH. Residues 118 to 128 are compositionally biased toward polar residues; the sequence is LTTSGSETVMS. Low complexity-rich tracts occupy residues 134 to 154 and 207 to 217; these read AFEA…STSA and SSAVSSSSSGS. The segment at 222–253 adopts a C2H2-type; atypical zinc-finger fold; the sequence is PRLFTCDMCLQYVSTSYEALEQHALDQHGDAL. Residues C227, C230, H244, and H249 each contribute to the Zn(2+) site. UTP is bound by residues S330 and 341 to 344; that span reads SDID. Positions 342 and 344 each coordinate Mg(2+). Position 390 (R390) interacts with RNA. D548 is a Mg(2+) binding site. UTP is bound by residues 555–559, K580, K584, and 598–599; these read GIRNS and SY. The 39-residue stretch at 659–697 folds into the PAP-associated domain; sequence GELLLGFFYYYAFEFDWVNHVVSLNRPGITTKASLGWDV. The segment at 750-1120 is important for catalytic activity and RNA binding; it reads GMMASSASAA…ARRVLRLLFR (371 aa). Positions 773–782 match the Nucleotide recognition motif (NRM) motif; sequence IEDPYEENLN. The segment at 800-900 is involved in oligomerization; that stretch reads YRGLLSLLKD…LLSDLEAAFL (101 aa). Positions 1047–1076 are disordered; sequence PSTTTQGEDPLASGTCEQGGVSPSLPTGAP.

The protein belongs to the DNA polymerase type-B-like family. As to quaternary structure, homotetramer. Part of a 700kDa complex. Interacts with p45 and p50 RNA ligases. It depends on Mg(2+) as a cofactor. Requires Mn(2+) as cofactor.

The protein localises to the mitochondrion. The enzyme catalyses RNA(n) + UTP = RNA(n)-3'-uridine ribonucleotide + diphosphate. With respect to regulation, zinc-binding is required for catalytic activity. Functionally, terminal uridylyltransferase which is involved in the post-transcriptional editing of mitochondrial RNA, a process involving the addition and deletion of uridine (U) nucleotides in the pre-mRNA. Specifically, catalyzes the addition of Us to the 3'-hydroxyl group of guided RNA (gRNA), with a preference for RNAs terminating in 6 Us, but also can add Us to RNAs terminating in 6 adenines (A), 6 cytosines (C), or 6 guanines (G). Can mediate RNA-independent UTP polymerization in vitro. Can mediate pyrophosphate-dependent degradation of synthetic RNA ending with U residues in vitro. In Leishmania tarentolae (Sauroleishmania tarentolae), this protein is Terminal uridylyltransferase 1.